The primary structure comprises 135 residues: Small ribosomal subunit protein uS17 (135 aa).

Positions 1 to 59 (MAEAKTGAKAAPRVAKAAKAAPKKAAPNDAEAIGAANAANVKGPKHTPRTPKPRGRRKT) are disordered. The span at 8-42 (AKAAPRVAKAAKAAPKKAAPNDAEAIGAANAANVK) shows a compositional bias: low complexity. The span at 43 to 59 (GPKHTPRTPKPRGRRKT) shows a compositional bias: basic residues.

The protein belongs to the universal ribosomal protein uS17 family. As to quaternary structure, part of the 30S ribosomal subunit.

Its function is as follows. One of the primary rRNA binding proteins, it binds specifically to the 5'-end of 16S ribosomal RNA. The sequence is that of Small ribosomal subunit protein uS17 from Mycobacterium bovis (strain ATCC BAA-935 / AF2122/97).